The primary structure comprises 236 residues: Ubiquinone biosynthesis O-methyltransferase (236 aa).

S-adenosyl-L-methionine-binding residues include arginine 36, glycine 60, aspartate 81, and leucine 123.

It belongs to the methyltransferase superfamily. UbiG/COQ3 family.

It carries out the reaction a 3-demethylubiquinol + S-adenosyl-L-methionine = a ubiquinol + S-adenosyl-L-homocysteine + H(+). The enzyme catalyses a 3-(all-trans-polyprenyl)benzene-1,2-diol + S-adenosyl-L-methionine = a 2-methoxy-6-(all-trans-polyprenyl)phenol + S-adenosyl-L-homocysteine + H(+). It participates in cofactor biosynthesis; ubiquinone biosynthesis. O-methyltransferase that catalyzes the 2 O-methylation steps in the ubiquinone biosynthetic pathway. This is Ubiquinone biosynthesis O-methyltransferase from Rickettsia canadensis (strain McKiel).